The sequence spans 423 residues: G2/mitotic-specific cyclin-B1 (423 aa).

Position 116 is a phosphoserine; by CDK1 (Ser116). Phosphoserine is present on Ser118. Position 123 is a phosphoserine; by PLK1 (Ser123). Ser137 is modified (phosphoserine). Interaction with CDK2 stretches follow at residues Glu159–Tyr167 and Tyr248–Met251. At Thr311 the chain carries Phosphothreonine.

The protein belongs to the cyclin family. Cyclin AB subfamily. In terms of assembly, interacts with the CDC2 protein kinase to form a serine/threonine kinase holoenzyme complex also known as maturation promoting factor (MPF). The cyclin subunit imparts substrate specificity to the complex. Binds HEI10. Interacts with catalytically active RALBP1 and CDC2 during mitosis to form an endocytotic complex during interphase. Interacts with CCNF; interaction is required for nuclear localization. Interacts with CDK5RAP3. Interacts with RFPL4A and UBE2A. Interacts with INCA1. In terms of processing, ubiquitinated by the SCF(NIPA) complex during interphase, leading to its destruction. Deubiquitinated by USP22 during G2/M phase. Phosphorylated by PLK1 at Ser-123 on centrosomes during prophase: phosphorylation by PLK1 does not cause nuclear import. Phosphorylation at Ser-137 was also reported to be mediated by PLK1 but Ser-123 seems to be the primary phosphorylation site.

It is found in the cytoplasm. The protein resides in the nucleus. The protein localises to the cytoskeleton. Its subcellular location is the microtubule organizing center. It localises to the centrosome. Essential for the control of the cell cycle at the G2/M (mitosis) transition. This Rattus norvegicus (Rat) protein is G2/mitotic-specific cyclin-B1 (Ccnb1).